The primary structure comprises 293 residues: uncharacterized protein (293 aa).

2 disordered regions span residues 1–95 (MFLR…KDKA) and 268–293 (EETA…GRAL). Residues Ser-34, Ser-35, and Ser-89 each carry the phosphoserine modification. 2 stretches are compositionally biased toward basic and acidic residues: residues 85–95 (KRMDSLKKDKA) and 277–286 (GQGKEAKEQT).

This is an uncharacterized protein from Rattus norvegicus (Rat).